The chain runs to 152 residues: FAD synthase (152 aa).

ATP contacts are provided by residues 9–10 (TF), 14–17 (HPGH), and Asp-92.

Belongs to the archaeal FAD synthase family. Homodimer. Requires a divalent metal cation as cofactor.

It carries out the reaction FMN + ATP + H(+) = FAD + diphosphate. Its pathway is cofactor biosynthesis; FAD biosynthesis; FAD from FMN: step 1/1. Catalyzes the transfer of the AMP portion of ATP to flavin mononucleotide (FMN) to produce flavin adenine dinucleotide (FAD) coenzyme. This is FAD synthase from Ferroglobus placidus (strain DSM 10642 / AEDII12DO).